Reading from the N-terminus, the 225-residue chain is Pathogenesis-related 5 protein Jun a 3.0101 (225 aa).

The signal sequence occupies residues 1–26 (MARVSELAFLLAATLAISLHMQEAGV). 8 cysteine pairs are disulfide-bonded: Cys35–Cys224, Cys76–Cys86, Cys91–Cys97, Cys139–Cys213, Cys144–Cys197, Cys152–Cys162, Cys166–Cys175, and Cys176–Cys184. IgE-binding regions lie at residues 146–157 (ADINAVCPSELK), 158–170 (VDGG…NVFK), and 178–191 (NAYV…NYSK).

This sequence belongs to the thaumatin family. As to expression, expressed in pollen (at protein level).

The polypeptide is Pathogenesis-related 5 protein Jun a 3.0101 (Juniperus ashei (Ozark white cedar)).